Consider the following 215-residue polypeptide: MAGEKAQKKGKEKWKEKTWYTVESPPYLGSKEVTVALGEDPESMVNRIVEVPISDLTGNFKKSNEKALFRITGCEGTKCKTIFIGHYIGDDYIRRLVRRRKERIDIIEDVKTSDGSIITVKIVVVSDGKLTNTKKSEIRKALTSFIVSKGSQLSYADFVRYLIGDDSYNDMVEATKNIYPLRKIEIRKSELVSLSGMQEPQKNEPAPGGEAIAQN.

The disordered stretch occupies residues 195-215 (SGMQEPQKNEPAPGGEAIAQN).

It belongs to the eukaryotic ribosomal protein eS1 family.

In Thermoplasma acidophilum (strain ATCC 25905 / DSM 1728 / JCM 9062 / NBRC 15155 / AMRC-C165), this protein is Small ribosomal subunit protein eS1.